Reading from the N-terminus, the 381-residue chain is ELMO domain-containing protein 3 (381 aa).

The segment covering 1-17 has biased composition (basic and acidic residues); that stretch reads MNENFHSFHEKELRDGQ. The interval 1–31 is disordered; that stretch reads MNENFHSFHEKELRDGQVESVSAGSSPPCDK. In terms of domain architecture, ELMO spans 170-324; the sequence is MHGRVLQTIY…DLEMSAKKSP (155 aa).

It is found in the cell projection. The protein localises to the stereocilium. The protein resides in the kinocilium. It localises to the cytoplasm. Its subcellular location is the cytoskeleton. Acts as a GTPase-activating protein (GAP) for ARL2 with low specific activity. The polypeptide is ELMO domain-containing protein 3 (ELMOD3) (Bos taurus (Bovine)).